Consider the following 106-residue polypeptide: Toxin-like structure LSTX-D6 (106 aa).

The signal sequence occupies residues 1-20 (MMKVLVVAALLVTLISYSSS). Positions 21–41 (EGIDDLEADELLSLMANEQTR) are excised as a propeptide. Intrachain disulfides connect C45-C60, C52-C69, C59-C85, and C71-C83.

This sequence belongs to the neurotoxin 19 (CSTX) family. 02 (D7) subfamily. As to expression, expressed by the venom gland.

It is found in the secreted. This chain is Toxin-like structure LSTX-D6, found in Lycosa singoriensis (Wolf spider).